A 510-amino-acid polypeptide reads, in one-letter code: 2-isopropylmalate synthase (510 aa).

The region spanning 5 to 267 (LIIFDTTLRD…DTRIDSVHIV (263 aa)) is the Pyruvate carboxyltransferase domain. Positions 14, 202, 204, and 238 each coordinate Mn(2+). Residues 392–510 (KLLSLTAHSE…SKLERAHPQV (119 aa)) form a regulatory domain region.

This sequence belongs to the alpha-IPM synthase/homocitrate synthase family. LeuA type 1 subfamily. Homodimer. It depends on Mn(2+) as a cofactor.

It is found in the cytoplasm. It carries out the reaction 3-methyl-2-oxobutanoate + acetyl-CoA + H2O = (2S)-2-isopropylmalate + CoA + H(+). Its pathway is amino-acid biosynthesis; L-leucine biosynthesis; L-leucine from 3-methyl-2-oxobutanoate: step 1/4. Its function is as follows. Catalyzes the condensation of the acetyl group of acetyl-CoA with 3-methyl-2-oxobutanoate (2-ketoisovalerate) to form 3-carboxy-3-hydroxy-4-methylpentanoate (2-isopropylmalate). This chain is 2-isopropylmalate synthase, found in Nitrosospira multiformis (strain ATCC 25196 / NCIMB 11849 / C 71).